The following is a 98-amino-acid chain: NADH-ubiquinone oxidoreductase chain 4L (98 aa).

3 consecutive transmembrane segments (helical) span residues 1-21 (MSMVYVNISLAFTLSLMGLLM), 29-49 (SLLCLEGMMLSLFVMMSITIM), and 61-81 (IILLVFAACEAALGLSLLVMI).

Belongs to the complex I subunit 4L family. In terms of assembly, core subunit of respiratory chain NADH dehydrogenase (Complex I) which is composed of 45 different subunits.

It localises to the mitochondrion inner membrane. The catalysed reaction is a ubiquinone + NADH + 5 H(+)(in) = a ubiquinol + NAD(+) + 4 H(+)(out). Its function is as follows. Core subunit of the mitochondrial membrane respiratory chain NADH dehydrogenase (Complex I) which catalyzes electron transfer from NADH through the respiratory chain, using ubiquinone as an electron acceptor. Part of the enzyme membrane arm which is embedded in the lipid bilayer and involved in proton translocation. This chain is NADH-ubiquinone oxidoreductase chain 4L (MT-ND4L), found in Procyon lotor (Raccoon).